A 234-amino-acid chain; its full sequence is Thiamine import ATP-binding protein ThiQ (234 aa).

Residues 2-230 (LTLQQVHYYY…HSHPELVEFF (229 aa)) form the ABC transporter domain. 32-39 (GPSGAGKS) contributes to the ATP binding site.

It belongs to the ABC transporter superfamily. Thiamine importer (TC 3.A.1.19.1) family. In terms of assembly, the complex is composed of two ATP-binding proteins (ThiQ), two transmembrane proteins (ThiP) and a solute-binding protein (ThiB).

It localises to the cell inner membrane. The catalysed reaction is thiamine(out) + ATP + H2O = thiamine(in) + ADP + phosphate + H(+). Part of the ABC transporter complex ThiBPQ involved in thiamine import. Responsible for energy coupling to the transport system. The chain is Thiamine import ATP-binding protein ThiQ from Vibrio vulnificus (strain CMCP6).